Reading from the N-terminus, the 304-residue chain is Recombination-associated protein RdgC (304 aa).

This sequence belongs to the RdgC family.

The protein localises to the cytoplasm. It localises to the nucleoid. Its function is as follows. May be involved in recombination. In Shewanella oneidensis (strain ATCC 700550 / JCM 31522 / CIP 106686 / LMG 19005 / NCIMB 14063 / MR-1), this protein is Recombination-associated protein RdgC.